The primary structure comprises 347 residues: L-threonine 3-dehydrogenase (347 aa).

Cys-42 is a binding site for Zn(2+). Residues Thr-44 and His-47 each act as charge relay system in the active site. Residues His-67, Glu-68, Cys-97, Cys-100, Cys-103, and Cys-111 each contribute to the Zn(2+) site. NAD(+) contacts are provided by residues Ile-179, Glu-199, Arg-204, 266-268 (LGL), and 291-292 (IT).

This sequence belongs to the zinc-containing alcohol dehydrogenase family. In terms of assembly, homotetramer. Requires Zn(2+) as cofactor.

It is found in the cytoplasm. It catalyses the reaction L-threonine + NAD(+) = (2S)-2-amino-3-oxobutanoate + NADH + H(+). Its pathway is amino-acid degradation; L-threonine degradation via oxydo-reductase pathway; glycine from L-threonine: step 1/2. In terms of biological role, catalyzes the NAD(+)-dependent oxidation of L-threonine to 2-amino-3-ketobutyrate. The chain is L-threonine 3-dehydrogenase from Caldanaerobacter subterraneus subsp. tengcongensis (strain DSM 15242 / JCM 11007 / NBRC 100824 / MB4) (Thermoanaerobacter tengcongensis).